A 321-amino-acid chain; its full sequence is MERMLLLSPPSLAARPERLNTILSSHSRYATDLQMLDRVAAGLVSLPQSTYDIVMLLTDVDGLGTGSTSAMGRGVIQSVVRALRPGGKFKRENGTFPSTECPDNTELMLAGLVFDDTGGLLKPDFGPENIVPLKLGKRKPVHSVSSNGTGTSGPHVNMQLSTGSMLKGQTTTIKGVGFVDFTDDPSLSEADIYSGQTDDELIDEETLLDGEDMGRPIIQPPECRPKAGKRRRACKDCTCGLAERLREEDKAARAKADATLETMKLAPKELAEVDFTVQGKLGSCGNCALGDAFRCDGCPYIGLPPFKPGEEVRLLSNDVQL.

Residues 1 to 131 (MERMLLLSPP…KPDFGPENIV (131 aa)) are N-terminal SAM-like domain. The linker stretch occupies residues 132-213 (PLKLGKRKPV…EETLLDGEDM (82 aa)). Positions 223, 234, 237, and 239 each coordinate [2Fe-2S] cluster. The fe-S binding site A stretch occupies residues 223 to 239 (CRPKAGKRRRACKDCTC). [4Fe-4S] cluster is bound by residues C284, C287, C295, and C298. Short sequence motifs (cx2C motif) lie at residues 284–287 (CGNC) and 295–298 (CDGC). A fe-S binding site B region spans residues 284–298 (CGNCALGDAFRCDGC).

This sequence belongs to the anamorsin family. As to quaternary structure, monomer. Interacts with TAH18. Interacts with MIA40. [2Fe-2S] cluster serves as cofactor. [4Fe-4S] cluster is required as a cofactor.

Its subcellular location is the cytoplasm. It is found in the mitochondrion intermembrane space. Functionally, component of the cytosolic iron-sulfur (Fe-S) protein assembly (CIA) machinery required for the maturation of extramitochondrial Fe-S proteins. Part of an electron transfer chain functioning in an early step of cytosolic Fe-S biogenesis, facilitating the de novo assembly of a [4Fe-4S] cluster on the scaffold complex CFD1-NBP35. Electrons are transferred to DRE2 from NADPH via the FAD- and FMN-containing protein TAH18. TAH18-DRE2 are also required for the assembly of the diferric tyrosyl radical cofactor of ribonucleotide reductase (RNR), probably by providing electrons for reduction during radical cofactor maturation in the catalytic small subunit RNR2. This Coccidioides posadasii (strain C735) (Valley fever fungus) protein is Fe-S cluster assembly protein DRE2.